Reading from the N-terminus, the 357-residue chain is Alanine racemase (357 aa).

The active-site Proton acceptor; specific for D-alanine is the lysine 35. Lysine 35 carries the N6-(pyridoxal phosphate)lysine modification. Arginine 130 lines the substrate pocket. Catalysis depends on tyrosine 253, which acts as the Proton acceptor; specific for L-alanine. Methionine 302 contacts substrate.

The protein belongs to the alanine racemase family. The cofactor is pyridoxal 5'-phosphate.

The enzyme catalyses L-alanine = D-alanine. It participates in amino-acid biosynthesis; D-alanine biosynthesis; D-alanine from L-alanine: step 1/1. Its function is as follows. Catalyzes the interconversion of L-alanine and D-alanine. May also act on other amino acids. The protein is Alanine racemase (alr) of Wigglesworthia glossinidia brevipalpis.